Consider the following 227-residue polypeptide: RNA pyrophosphohydrolase (227 aa).

Residues 6–149 (GFRPNVGIIL…KRDVYQMALT (144 aa)) form the Nudix hydrolase domain. A Nudix box motif is present at residues 38 to 59 (GGIKYGETPEQAMYRELHEEIG). The disordered stretch occupies residues 165-227 (PYGTHGAHGA…PVSTTRSTDD (63 aa)). Residues 192 to 201 (AQAAQQADAD) are compositionally biased toward low complexity. The span at 217–227 (TPVSTTRSTDD) shows a compositional bias: polar residues.

The protein belongs to the Nudix hydrolase family. RppH subfamily. The cofactor is a divalent metal cation.

Accelerates the degradation of transcripts by removing pyrophosphate from the 5'-end of triphosphorylated RNA, leading to a more labile monophosphorylated state that can stimulate subsequent ribonuclease cleavage. The sequence is that of RNA pyrophosphohydrolase from Cupriavidus taiwanensis (strain DSM 17343 / BCRC 17206 / CCUG 44338 / CIP 107171 / LMG 19424 / R1) (Ralstonia taiwanensis (strain LMG 19424)).